We begin with the raw amino-acid sequence, 477 residues long: Chromosomal replication initiator protein DnaA (477 aa).

Residues 1-87 (MSDRSDPTHA…AGVSNFAIVV (87 aa)) form a domain I, interacts with DnaA modulators region. The domain II stretch occupies residues 87–132 (VNPEIAQDAFAQHPEPAAEQPYIETPTITAPTDNPGLPASPSRGDS). The disordered stretch occupies residues 112–131 (PTITAPTDNPGLPASPSRGD). The segment at 133-349 (RLNPKYGFDT…GTLIRVTAFA (217 aa)) is domain III, AAA+ region. ATP is bound by residues Gly177, Gly179, Lys180, and Thr181. The tract at residues 350–477 (SLNKTPVDLA…IKQNHRYGKM (128 aa)) is domain IV, binds dsDNA.

It belongs to the DnaA family. Oligomerizes as a right-handed, spiral filament on DNA at oriC.

Its subcellular location is the cytoplasm. Functionally, plays an essential role in the initiation and regulation of chromosomal replication. ATP-DnaA binds to the origin of replication (oriC) to initiate formation of the DNA replication initiation complex once per cell cycle. Binds the DnaA box (a 9 base pair repeat at the origin) and separates the double-stranded (ds)DNA. Forms a right-handed helical filament on oriC DNA; dsDNA binds to the exterior of the filament while single-stranded (ss)DNA is stabiized in the filament's interior. The ATP-DnaA-oriC complex binds and stabilizes one strand of the AT-rich DNA unwinding element (DUE), permitting loading of DNA polymerase. After initiation quickly degrades to an ADP-DnaA complex that is not apt for DNA replication. Binds acidic phospholipids. This is Chromosomal replication initiator protein DnaA from Clavibacter michiganensis subsp. michiganensis (strain NCPPB 382).